The sequence spans 331 residues: 3'-5' exonuclease (331 aa).

The disordered stretch occupies residues 27-92 (ERVKQTNAAK…EDGPASPEKE (66 aa)). The span at 31-43 (QTNAAKKQIATNN) shows a compositional bias: polar residues. The span at 47-67 (KNQDTPEMIKDKENAESENPP) shows a compositional bias: basic and acidic residues. A phosphoserine mark is found at Ser-80 and Ser-88. The 3'-5' exonuclease domain maps to 118–290 (SADEVMQWVE…IGQVIYREIE (173 aa)). 3 residues coordinate Mg(2+): Asp-140, Glu-142, and Asp-278.

It belongs to the WRNexo family.

The protein resides in the nucleus. In terms of biological role, has exonuclease activity on both single-stranded and duplex templates bearing overhangs, but not blunt ended duplex DNA, and cleaves in a 3'-5' direction. Essential for the formation of DNA replication focal centers. Has an important role in maintaining genome stability. The protein is 3'-5' exonuclease of Drosophila grimshawi (Hawaiian fruit fly).